The sequence spans 667 residues: Fermitin family homolog 3 (667 aa).

S8 carries the phosphoserine modification. Y11 carries the phosphotyrosine modification. Residues 229 to 558 (WLDSSRCLMQ…SLPDFGISYV (330 aa)) form the FERM domain. A PH domain is found at 354–457 (DHLRIFRIPR…WMAGCRLASK (104 aa)). Y504 is modified (phosphotyrosine). Phosphothreonine is present on T591.

The protein belongs to the kindlin family. As to quaternary structure, interacts with ITGB1, ITGB2 and ITGB3 (via cytoplasmic tails). In terms of tissue distribution, highly expressed in lymph node. Expressed in thymus, spleen and leukocytes. Weakly expressed in placenta, small intestine, stomach, testis and lung. Overexpressed in B-cell malignancies.

The protein resides in the cell projection. It localises to the podosome. Functionally, plays a central role in cell adhesion in hematopoietic cells. Acts by activating the integrin beta-1-3 (ITGB1, ITGB2 and ITGB3). Required for integrin-mediated platelet adhesion and leukocyte adhesion to endothelial cells. Required for activation of integrin beta-2 (ITGB2) in polymorphonuclear granulocytes (PMNs). Isoform 2 may act as a repressor of NF-kappa-B and apoptosis. The chain is Fermitin family homolog 3 (FERMT3) from Homo sapiens (Human).